A 1088-amino-acid polypeptide reads, in one-letter code: MGKYNLILSEYLSFIYNSQSAVQIPIYYSSNSELENRCIEFHSKCLENSKNGLSLRKLFVEYNDVIENATLLSILSYSYDKYNAVERKLVKYAKGKPLEADLTVNELDYENNKITSELFPTAEEYTDSLMDPAILTSLSSNLNAVMFWLEKHENDVAEKLKVYKRRLDLFTIVASTINKYGVPRHNAKYRYEYDVMKDKPYYLVTWANSSIEMLMSVFSHDDYLIAKELIVLSYSNRSTLAKLVSSPMSILVALVDINGTFITNEELELEFSNKYVRAIVPDQTFDELNQMLDNMRKAGLVDIPKMIQDWLVDRSIEKFPLMAKIYSWSFHVGFRKQKMLDAALDQLKTEYTENVDDEMYREYTMLIRDEVVKMLEEPVKHDDHLLRDSELAGLLSMSSASNGESRQLKFGRKTIFSTKKNMHVMDDMANERYTPGIIPPVNVDKPIPLGRRDVPGRRTRIIFILPYEYFIAQHAVVEKMLIYAKHTREYAEFYSQSNQLLSYGDVTRFLSNNTMVLYTDVSQWDSSQHNTQPFRKGIIMGLDILANMTNDAKVLQTLNLYKQTQINLMDSYVQIPDGNVIKKIQYGAVASGEKQTKAANSIANLALIKTVLSRISNKHSFATKIIRVDGDDNYAVLQFNTEVTKQMIQDVSNDVRETYARMNAKVKALVSTVGIEIAKRYIAGGKIFFRAGINLLNNEKRGQSTQWDQAAILYSNYIVNRLRGFETDREFILTKIMQMTSVAITGSLRLFPSERVLTTNSTFKVFDSEDFIIEYGTTDDEVYIQRAFMSLSSQKSGIADEIAASSTFKNYVTRLSEQLLFSKNNIVSRGIALTEKAKLNSYAPISLEKRRAQISALLTMLQKPVTFKSSKITINDILRDIKPFFTVSDAHLPIQYQKFMPTLPDNVQYIIQCIGSRTYQIEDDGSKSAISRLISKYSVYKPSIEELYKVISLHENEIQLYLISLGIPKIDADTYVGSKIYSQDKYRILESYVYNLLSINYGCYQLFDFNSPDLEKLIRIPFKGKIPAVTFILHLYAKLEVINYAIKNGSWISLFCNYPKSEMIKLWKKMWNITSLRSPYTNANFFQD.

Residues 501-687 (LSYGDVTRFL…AKRYIAGGKI (187 aa)) enclose the RdRp catalytic domain.

Belongs to the reoviridae RNA-directed RNA polymerase family. Interacts with VP3 (Potential). Interacts with VP2; this interaction activates VP1. Interacts with NSP5; this interaction is probably necessary for the formation of functional virus factories. Interacts with NSP2; this interaction is weak. Mg(2+) serves as cofactor.

The protein localises to the virion. It carries out the reaction RNA(n) + a ribonucleoside 5'-triphosphate = RNA(n+1) + diphosphate. In terms of biological role, RNA-directed RNA polymerase that is involved in both transcription and genome replication. Together with VP3 capping enzyme, forms an enzyme complex positioned near the channels situated at each of the five-fold vertices of the core. Following infection, the outermost layer of the virus is lost, leaving a double-layered particle (DLP) made up of the core and VP6 shell. VP1 then catalyzes the transcription of fully conservative plus-strand genomic RNAs that are extruded through the DLP's channels into the cytoplasm where they function as mRNAs for translation of viral proteins. One copy of each of the viral (+)RNAs is also recruited during core assembly, together with newly synthesized polymerase complexes and VP2. The polymerase of these novo-formed particles catalyzes the synthesis of complementary minus-strands leading to dsRNA formation. To do so, the polymerase specifically recognizes and binds 4 bases 5'-UGUG-3' in the conserved 3'-sequence of plus-strand RNA templates. VP2 presumably activates the autoinhibited VP1-RNA complex to coordinate packaging and genome replication. Once dsRNA synthesis is complete, the polymerase switches to the transcriptional mode, thus providing secondary transcription. The polypeptide is RNA-directed RNA polymerase (Chlorocebus pygerythrus (Vervet monkey)).